Reading from the N-terminus, the 327-residue chain is Tryptophan--tRNA ligase (327 aa).

ATP-binding positions include 9 to 11 and 17 to 18; these read RPT and GN. A 'HIGH' region motif is present at residues 10–18; the sequence is PTGNLHLGN. Asp-133 contacts L-tryptophan. ATP-binding positions include 145 to 147, Val-186, and 194 to 198; these read GKD and KMGKS. The 'KMSKS' region signature appears at 194-198; sequence KMGKS.

The protein belongs to the class-I aminoacyl-tRNA synthetase family. As to quaternary structure, homodimer.

The protein localises to the cytoplasm. It carries out the reaction tRNA(Trp) + L-tryptophan + ATP = L-tryptophyl-tRNA(Trp) + AMP + diphosphate + H(+). Catalyzes the attachment of tryptophan to tRNA(Trp). This Porphyromonas gingivalis (strain ATCC BAA-308 / W83) protein is Tryptophan--tRNA ligase.